A 2016-amino-acid polypeptide reads, in one-letter code: Sodium channel protein type 5 subunit alpha (2016 aa).

At 1–129 (MANFLLPRGT…IRRAAVKILV (129 aa)) the chain is on the cytoplasmic side. A disordered region spans residues 28–56 (MAEKQARGSTTLQESREGLPEEEAPRPQL). Ser-36 is modified (phosphoserine). Thr-38 bears the Phosphothreonine mark. Positions 41 to 52 (ESREGLPEEEAP) are enriched in basic and acidic residues. Residues 113–420 (VLSPFHPIRR…VVAMAYEEQN (308 aa)) form an I repeat. A helical membrane pass occupies residues 130–149 (HSLFNMLIMCTILTNCVFMA). Residues 150-157 (QHDPPPWT) are Extracellular-facing. A helical membrane pass occupies residues 158–179 (KYVEYTFTAIYTFESLVKILAR). Residues 180–188 (GFCLHAFTF) lie on the Cytoplasmic side of the membrane. A helical transmembrane segment spans residues 189–209 (LRDPWNWLDFSVIIMAYTTEF). The Extracellular portion of the chain corresponds to 210–216 (VDLGNVS). An N-linked (GlcNAc...) asparagine glycan is attached at Asn-214. A helical membrane pass occupies residues 217–236 (ALRTFRVLRALKTISVISGL). Residues 237-249 (KTIVGALIQSVKK) are Cytoplasmic-facing. A helical transmembrane segment spans residues 250–272 (LADVMVLTVFCLSVFALIGLQLF). At 273 to 357 (MGNLRHKCVR…PDHGYTSFDS (85 aa)) the chain is on the extracellular side. A disulfide bridge connects residues Cys-280 and Cys-335. Residues Asn-283, Asn-288, Asn-291, Asn-318, and Asn-328 are each glycosylated (N-linked (GlcNAc...) asparagine). The pore-forming intramembrane region spans 358–378 (FAWAFLALFRLMTQDCWERLY). The Extracellular portion of the chain corresponds to 379–386 (QQTLRSAG). A helical transmembrane segment spans residues 387-413 (KIYMIFFMLVIFLGSFYLVNLILAVVA). Residues 414–719 (MAYEEQNQAT…VKLVVMDPFT (306 aa)) are Cytoplasmic-facing. 4 positions are modified to phosphoserine: Ser-457, Ser-460, Ser-483, and Ser-484. Residues 461-591 (LEMSPLAPVN…APGHALHGKK (131 aa)) are disordered. Thr-486 carries the post-translational modification Phosphothreonine. Residues 491–503 (EDRLPKSDSEDGP) are compositionally biased toward basic and acidic residues. Ser-497 and Ser-510 each carry phosphoserine. Over residues 509–528 (LSLTRGLSRTSMKPRSSRGS) the composition is skewed to polar residues. Residues Arg-513 and Arg-526 each carry the dimethylated arginine; alternate modification. Arg-513 and Arg-526 each carry omega-N-methylarginine; alternate. Phosphoserine is present on residues Ser-539, Ser-571, Ser-664, and Ser-667. Residues 570–580 (TSAQGQPSPGT) are compositionally biased toward polar residues. Residue Arg-680 is modified to Dimethylated arginine; alternate. Arg-680 carries the post-translational modification Omega-N-methylarginine; alternate. The II repeat unit spans residues 699–969 (CCPLWMSIKQ…QLALARIQRG (271 aa)). A helical membrane pass occupies residues 720 to 737 (DLTITMCIVLNTLFMALE). The Extracellular portion of the chain corresponds to 738-746 (HYNMTSEFE). An N-linked (GlcNAc...) asparagine glycan is attached at Asn-740. A helical membrane pass occupies residues 747-769 (EMLQVGNLVFTGIFTAEMTFKII). Topologically, residues 770 to 775 (ALDPYY) are cytoplasmic. A helical transmembrane segment spans residues 776 to 796 (YFQQGWNIFDSIIVILSLMEL). The Extracellular portion of the chain corresponds to 797-806 (GLSRMSNLSV). Asn-803 carries N-linked (GlcNAc...) asparagine glycosylation. A helical transmembrane segment spans residues 807-821 (LRSFRLLRVFKLAKS). At 822-838 (WPTLNTLIKIIGNSVGA) the chain is on the cytoplasmic side. Residues 839 to 860 (LGNLTLVLAIIVFIFAVVGMQL) form a helical membrane-spanning segment. Residues 861–884 (FGKNYSELRDSDSGLLPRWHMMDF) lie on the Extracellular side of the membrane. An N-linked (GlcNAc...) asparagine glycan is attached at Asn-864. The pore-forming intramembrane region spans 885–903 (FHAFLIIFRILCGEWIETM). Topologically, residues 904–912 (WDCMEVSGQ) are extracellular. A disulfide bridge links Cys-906 with Cys-915. The helical transmembrane segment at 913-941 (SLCLLVFLLVMVIGNLVVLNLFLALLLSS) threads the bilayer. At 942–1203 (FSADNLTAPD…LRKTCYHIVE (262 aa)) the chain is on the cytoplasmic side. The tract at residues 1005-1141 (IATPYSPPPP…PEDSCSEGST (137 aa)) is disordered. The segment covering 1015–1030 (ETEKVPPTRKETRFEE) has biased composition (basic and acidic residues). Over residues 1033–1044 (QPGQGTPGDPEP) the composition is skewed to low complexity. The span at 1054-1071 (SDTDDQEEDEENSLGTEE) shows a compositional bias: acidic residues. Low complexity predominate over residues 1096-1113 (SQVSATASSEAEASASQA). One copy of the III repeat lies at 1187 to 1501 (PGKVWWRLRK…KKYYNAMKKL (315 aa)). The chain crosses the membrane as a helical span at residues 1204–1225 (HSWFETFIIFMILLSSGALAFE). The Extracellular portion of the chain corresponds to 1226–1236 (DIYLEERKTIK). The chain crosses the membrane as a helical span at residues 1237–1259 (VLLEYADKMFTYVFVLEMLLKWV). Over 1260 to 1268 (AYGFKKYFT) the chain is Cytoplasmic. The chain crosses the membrane as a helical span at residues 1269–1291 (NAWCWLDFLIVDVSLVSLVANTL). The Extracellular segment spans residues 1292–1297 (GFAEMG). The helical transmembrane segment at 1298–1317 (PIKSLRTLRALRPLRALSRF) threads the bilayer. Over 1318 to 1330 (EGMRVVVNALVGA) the chain is Cytoplasmic. A helical membrane pass occupies residues 1331-1355 (IPSIMNVLLVCLIFWLIFSIMGVNL). The Extracellular segment spans residues 1356-1400 (FAGKFGRCINQTEGDLPLNYTIVNNKSQCESLNLTGELYWTKVKV). 4 N-linked (GlcNAc...) asparagine glycosylation sites follow: Asn-1365, Asn-1374, Asn-1380, and Asn-1388. The segment at residues 1401 to 1422 (NFDNVGAGYLALLQVATFKGWM) is an intramembrane region (pore-forming). At 1423-1445 (DIMYAAVDSRGYEEQPQWEYNLY) the chain is on the extracellular side. A helical membrane pass occupies residues 1446–1470 (MYIYFVIFIIFGSFFTLNLFIGVII). Topologically, residues 1471–1528 (DNFNQQKKKLGGQDIFMTEEQKKYYNAMKKLGSKKPQKPIPRPLNKYQGFIFDIVTKQ) are cytoplasmic. Ser-1503 carries the phosphoserine; by PKC modification. The stretch at 1510-1807 (IPRPLNKYQG…WEKFDPEATQ (298 aa)) is one IV repeat. Residues 1529-1547 (AFDVTIMFLICLNMVTMMV) traverse the membrane as a helical segment. The Extracellular portion of the chain corresponds to 1548 to 1558 (ETDDQSPEKIN). A helical transmembrane segment spans residues 1559–1580 (ILAKINLLFVAIFTGECIVKLA). Topologically, residues 1581–1589 (ALRHYYFTN) are cytoplasmic. Residues 1590-1612 (SWNIFDFVVVILSIVGTVLSDII) traverse the membrane as a helical segment. At 1613–1619 (QKYFFSP) the chain is on the extracellular side. Residues 1620-1640 (TLFRVIRLARIGRILRLIRGA) form a helical membrane-spanning segment. The Cytoplasmic portion of the chain corresponds to 1641–1650 (KGIRTLLFAL). The helical transmembrane segment at 1651 to 1679 (MMSLPALFNIGLLLFLVMFIYSIFGMANF) threads the bilayer. Topologically, residues 1680 to 1697 (AYVKWEAGIDDMFNFQTF) are extracellular. Residues 1698 to 1714 (ANSMLCLFQITTSAGWD) constitute an intramembrane region (pore-forming). Residues 1715–1745 (GLLSPILNTGPPYCDPTLPNSNGSRGDCGSP) are Extracellular-facing. N-linked (GlcNAc...) asparagine glycosylation occurs at Asn-1736. A helical membrane pass occupies residues 1746–1771 (AVGILFFTTYIIISFLIVVNMYIAII). Residues 1772-2016 (LENFSVATEE…SPDRDRESIV (245 aa)) lie on the Cytoplasmic side of the membrane. The interaction with FGF13 stretch occupies residues 1839–1901 (DLPMVSGDRI…ITTTLRRKHE (63 aa)). The 30-residue stretch at 1901–1930 (EEVSAMVIQRAFRRHLLQRSLKHASFLFRQ) folds into the IQ domain. The segment covering 1959–1979 (PLGPPSSSSISSTSFPPSYDS) has biased composition (low complexity). A disordered region spans residues 1959–2016 (PLGPPSSSSISSTSFPPSYDSVTRATSDNLQVRGSDYSHSEDLADFPPSPDRDRESIV). The tract at residues 1974–1977 (PPSY) is interaction with NEDD4, NEDD4L and WWP2. Positions 1981–1990 (TRATSDNLQV) are enriched in polar residues.

This sequence belongs to the sodium channel (TC 1.A.1.10) family. Nav1.5/SCN5A subfamily. Cannot form the same regulatory interactions with beta subunits as other Navs do. Interacts with the PDZ domain of the syntrophin SNTA1, SNTB1 and SNTB2. Interacts with NEDD4, NEDD4L, WWP2 and GPD1L. Interacts with CALM. Interacts with FGF13; the interaction is direct and FGF13 may regulate SNC5A density at membranes and function. May also interact with FGF12 and FGF14. Interacts with TMEM233. Interacts with the spider Jingzhaotoxin-I (AC P83974, AC B1P1B7, AC B1P1B8). Interacts with ANK3. Interacts with PKP2 (via N-terminus). Interacts with XIRP2; the interaction is required for normal action potential configuration in the heart. Ubiquitinated by NEDD4L; which promotes its endocytosis. Does not seem to be ubiquitinated by NEDD4 or WWP2. Post-translationally, phosphorylation at Ser-1503 by PKC in a highly conserved cytoplasmic loop slows inactivation of the sodium channel and reduces peak sodium currents. Regulated through phosphorylation by CaMK2D. In terms of processing, lacks the cysteine which covalently binds the conotoxin GVIIJ. This cysteine (position 868) is speculated in other sodium channel subunits alpha to be implied in covalent binding with the sodium channel subunit beta-2 or beta-4. N-glycosylated at Asn-318, probably hinders potential interaction with regulatory subunits. As to expression, found in jejunal circular smooth muscle cells (at protein level). Expressed in human atrial and ventricular cardiac muscle but not in adult skeletal muscle, brain, myometrium, liver, or spleen. Isoform 4 is expressed in brain.

Its subcellular location is the cell membrane. The protein resides in the cytoplasm. It localises to the perinuclear region. It is found in the sarcolemma. The protein localises to the T-tubule. Its subcellular location is the cell junction. It carries out the reaction Na(+)(in) = Na(+)(out). Channel inactivation is regulated by intracellular calcium levels. It is a tetrodotoxin-resistant voltage-gated Na(+) channel (Nav). Functionally, pore-forming subunit of Nav1.5, a voltage-gated sodium (Nav) channel that directly mediates the depolarizing phase of action potentials in excitable membranes. Navs, also called VGSCs (voltage-gated sodium channels) or VDSCs (voltage-dependent sodium channels), operate by switching between closed and open conformations depending on the voltage difference across the membrane. In the open conformation they allow Na(+) ions to selectively pass through the pore, along their electrochemical gradient. The influx of Na(+) ions provokes membrane depolarization, initiating the propagation of electrical signals throughout cells and tissues. Nav1.5 is the predominant sodium channel expressed in myocardial cells and it is responsible for the initial upstroke of the action potential in cardiac myocytes, thereby initiating the heartbeat. Required for normal electrical conduction including formation of the infranodal ventricular conduction system and normal action potential configuration, as a result of its interaction with XIRP2. This is Sodium channel protein type 5 subunit alpha from Homo sapiens (Human).